The chain runs to 292 residues: 4-hydroxy-tetrahydrodipicolinate synthase (292 aa).

Thr-45 lines the pyruvate pocket. The Proton donor/acceptor role is filled by Tyr-133. Lys-161 serves as the catalytic Schiff-base intermediate with substrate. Residue Ile-203 coordinates pyruvate.

This sequence belongs to the DapA family. As to quaternary structure, homotetramer; dimer of dimers.

The protein localises to the cytoplasm. It catalyses the reaction L-aspartate 4-semialdehyde + pyruvate = (2S,4S)-4-hydroxy-2,3,4,5-tetrahydrodipicolinate + H2O + H(+). It participates in amino-acid biosynthesis; L-lysine biosynthesis via DAP pathway; (S)-tetrahydrodipicolinate from L-aspartate: step 3/4. In terms of biological role, catalyzes the condensation of (S)-aspartate-beta-semialdehyde [(S)-ASA] and pyruvate to 4-hydroxy-tetrahydrodipicolinate (HTPA). The chain is 4-hydroxy-tetrahydrodipicolinate synthase from Dechloromonas aromatica (strain RCB).